The chain runs to 355 residues: tRNA-specific 2-thiouridylase MnmA (355 aa).

ATP-binding positions include 6–13 (AMSGGVDS) and M32. C93 serves as the catalytic Nucleophile. Cysteines 93 and 191 form a disulfide. G117 is an ATP binding site. The interval 140-142 (KDQ) is interaction with tRNA. The active-site Cysteine persulfide intermediate is the C191. Residues 296–297 (RY) are interaction with tRNA.

It belongs to the MnmA/TRMU family.

It localises to the cytoplasm. The catalysed reaction is S-sulfanyl-L-cysteinyl-[protein] + uridine(34) in tRNA + AH2 + ATP = 2-thiouridine(34) in tRNA + L-cysteinyl-[protein] + A + AMP + diphosphate + H(+). Functionally, catalyzes the 2-thiolation of uridine at the wobble position (U34) of tRNA, leading to the formation of s(2)U34. This is tRNA-specific 2-thiouridylase MnmA from Pelobacter propionicus (strain DSM 2379 / NBRC 103807 / OttBd1).